The sequence spans 183 residues: ATP synthase subunit b 2 (183 aa).

A helical membrane pass occupies residues 27 to 47 (PSFYAFLALLIFFGLLLHMGV).

It belongs to the ATPase B chain family. F-type ATPases have 2 components, F(1) - the catalytic core - and F(0) - the membrane proton channel. F(1) has five subunits: alpha(3), beta(3), gamma(1), delta(1), epsilon(1). F(0) has three main subunits: a(1), b(2) and c(10-14). The alpha and beta chains form an alternating ring which encloses part of the gamma chain. F(1) is attached to F(0) by a central stalk formed by the gamma and epsilon chains, while a peripheral stalk is formed by the delta and b chains.

The protein localises to the cell inner membrane. In terms of biological role, f(1)F(0) ATP synthase produces ATP from ADP in the presence of a proton or sodium gradient. F-type ATPases consist of two structural domains, F(1) containing the extramembraneous catalytic core and F(0) containing the membrane proton channel, linked together by a central stalk and a peripheral stalk. During catalysis, ATP synthesis in the catalytic domain of F(1) is coupled via a rotary mechanism of the central stalk subunits to proton translocation. Functionally, component of the F(0) channel, it forms part of the peripheral stalk, linking F(1) to F(0). This is ATP synthase subunit b 2 from Maricaulis maris (strain MCS10) (Caulobacter maris).